Here is a 554-residue protein sequence, read N- to C-terminus: CTP synthase (554 aa).

The interval 1–265 (MTPLIFVTGG…DELVIDQFKL (265 aa)) is amidoligase domain. S13 serves as a coordination point for CTP. S13 is a binding site for UTP. ATP-binding positions include 14-19 (SLGKGI) and D71. Mg(2+)-binding residues include D71 and E139. Residues 146–148 (DIE), 186–191 (KTKPTQ), and K222 each bind CTP. UTP is bound by residues 186–191 (KTKPTQ) and K222. A Glutamine amidotransferase type-1 domain is found at 292-545 (NIAVVGKYVD…VRAAREKKAG (254 aa)). G353 is a binding site for L-glutamine. C380 (nucleophile; for glutamine hydrolysis) is an active-site residue. L-glutamine is bound by residues 381-384 (YGMQ), E404, and R471. Active-site residues include H518 and E520.

It belongs to the CTP synthase family. As to quaternary structure, homotetramer.

The catalysed reaction is UTP + L-glutamine + ATP + H2O = CTP + L-glutamate + ADP + phosphate + 2 H(+). It catalyses the reaction L-glutamine + H2O = L-glutamate + NH4(+). The enzyme catalyses UTP + NH4(+) + ATP = CTP + ADP + phosphate + 2 H(+). The protein operates within pyrimidine metabolism; CTP biosynthesis via de novo pathway; CTP from UDP: step 2/2. Allosterically activated by GTP, when glutamine is the substrate; GTP has no effect on the reaction when ammonia is the substrate. The allosteric effector GTP functions by stabilizing the protein conformation that binds the tetrahedral intermediate(s) formed during glutamine hydrolysis. Inhibited by the product CTP, via allosteric rather than competitive inhibition. In terms of biological role, catalyzes the ATP-dependent amination of UTP to CTP with either L-glutamine or ammonia as the source of nitrogen. Regulates intracellular CTP levels through interactions with the four ribonucleotide triphosphates. The protein is CTP synthase of Xanthomonas axonopodis pv. citri (strain 306).